We begin with the raw amino-acid sequence, 360 residues long: 3-dehydroquinate synthase (360 aa).

NAD(+)-binding positions include 70 to 75 (DGEKYK), 104 to 108 (GVIGD), 128 to 129 (TT), lysine 141, and lysine 150. Positions 183, 246, and 263 each coordinate Zn(2+).

The protein belongs to the sugar phosphate cyclases superfamily. Dehydroquinate synthase family. The cofactor is Co(2+). Zn(2+) serves as cofactor. NAD(+) is required as a cofactor.

It is found in the cytoplasm. The catalysed reaction is 7-phospho-2-dehydro-3-deoxy-D-arabino-heptonate = 3-dehydroquinate + phosphate. The protein operates within metabolic intermediate biosynthesis; chorismate biosynthesis; chorismate from D-erythrose 4-phosphate and phosphoenolpyruvate: step 2/7. Functionally, catalyzes the conversion of 3-deoxy-D-arabino-heptulosonate 7-phosphate (DAHP) to dehydroquinate (DHQ). This is 3-dehydroquinate synthase from Acinetobacter baumannii (strain SDF).